Consider the following 84-residue polypeptide: MAHKKGQGASRNGRDSKSKRLGVKVGAGQKVSTGSILVRQRGTRWNPAQNVGRGRDDTLFALVDGIVVMKKTNRTYISVVPEQL.

The disordered stretch occupies residues 1-27; the sequence is MAHKKGQGASRNGRDSKSKRLGVKVGA.

The protein belongs to the bacterial ribosomal protein bL27 family.

This is Large ribosomal subunit protein bL27 from Chlamydia pneumoniae (Chlamydophila pneumoniae).